Here is a 183-residue protein sequence, read N- to C-terminus: Large ribosomal subunit protein uL6 (183 aa).

Belongs to the universal ribosomal protein uL6 family. As to quaternary structure, part of the 50S ribosomal subunit.

This protein binds to the 23S rRNA, and is important in its secondary structure. It is located near the subunit interface in the base of the L7/L12 stalk, and near the tRNA binding site of the peptidyltransferase center. The protein is Large ribosomal subunit protein uL6 of Chlamydia trachomatis serovar L2 (strain ATCC VR-902B / DSM 19102 / 434/Bu).